The chain runs to 550 residues: MSEDLKRSASDIQDELAQSPKRVKFNDPPQIDDVNKYDANNVNANANVNANANVNANANDSNSNNFASIASNVTTNPIDFTVTQPQPVSPEIQNPITTLLQTDPGVGASKDLLTTNGSAINITKNADTNNIETNTASINPVSNTNTNTKPASVDTVDIKSVSANTADTATDTKPVSADNADTATDTKPVSADTADTADTDADAKPASANTSNTTNANTAGTGASNTDVANSSSATTSTGDAKPQVQGANETGSNQHDQRDSSKLNDAIAAAGVDIQKEEELLQQRQLNRKPGAPSEKQDGSKSQTQVPLLNPYHLSAFLAKVSKTHQIHQNFLEDGNLLNLISDACEDWLSHIASKALILSRHRRRGTQFSLKKGGLSSLTQLSQQRSAVSKELRNLALRQKEMEEKRVQKRIVLGLEKSSGNGTDDAANGKPGSEETLHRAANATAAMMATGKKKYSWMSSGGGGAGSIGSLGDDARGSGVGIGGGGVGGGDSKTKQSAILSARGDNGLRYRDLRSTNAIVLKDLLNALEGEKKGTQHAITKGYAKLRD.

Disordered stretches follow at residues 1–29, 165–262, and 287–307; these read MSED…NDPP, TADT…RDSS, and LNRK…QTQV. Positions 165 to 187 are enriched in polar residues; it reads TADTATDTKPVSADNADTATDTK. A compositionally biased stretch (low complexity) spans 206–226; that stretch reads ASANTSNTTNANTAGTGASNT. Polar residues-rich tracts occupy residues 227–239 and 246–255; these read DVAN…TSTG and QGANETGSNQ. A Histone-fold domain is found at 316 to 396; sequence SAFLAKVSKT…RSAVSKELRN (81 aa). Residues 380-412 are a coiled coil; it reads LTQLSQQRSAVSKELRNLALRQKEMEEKRVQKR.

Belongs to the TAF4 family. As to quaternary structure, the 1.2 MDa TFIID complex is composed of TATA binding protein (TBP) and the 14 TBP-associated factors.

Its subcellular location is the nucleus. Its function is as follows. Functions as a component of the DNA-binding general transcription factor complex TFIID. Binding of TFIID to a promoter (with or without TATA element) is the initial step in pre-initiation complex (PIC) formation. TFIID plays a key role in the regulation of gene expression by RNA polymerase II through different activities such as transcription activator interaction, core promoter recognition and selectivity, TFIIA and TFIIB interaction, chromatin modification (histone acetylation by TAF1), facilitation of DNA opening and initiation of transcription. This is Transcription initiation factor TFIID subunit 4 (TAF4) from Lodderomyces elongisporus (strain ATCC 11503 / CBS 2605 / JCM 1781 / NBRC 1676 / NRRL YB-4239) (Yeast).